Consider the following 56-residue polypeptide: Large ribosomal subunit protein bL32 (56 aa).

A disordered region spans residues 1–35 (MAVQQNKSTRSKRGMRRSHHALRSVTISVDRTSGE). Residues 9–22 (TRSKRGMRRSHHAL) are compositionally biased toward basic residues.

It belongs to the bacterial ribosomal protein bL32 family.

This chain is Large ribosomal subunit protein bL32, found in Blochmanniella pennsylvanica (strain BPEN).